The following is a 241-amino-acid chain: MSLLSAIDTSAASVYQPAQLLNWVYLSLQDTHQASAFDAFRPEPTAGAAPPELAFGKGRPEQLGSPLHSSYLNSFFQLQRGEALSNSVYKGASPYGSLNNIADGLSSLTEHFSDLTLTSEARKPSKRPPPNYLCHLCFNKGHYIKDCPQARPKGEGLTPYQGKKRCFGEYKCPKCKRKWMSGNSWANMGQECIKCHINVYPHKQRPLEKPDGLDVSDQSKEHPQHLCEKCKVLGYYCRRVQ.

Phosphoserine is present on residues serine 65 and serine 93. The CCHC-type zinc finger occupies 132-149 (YLCHLCFNKGHYIKDCPQ).

The sequence is that of Zinc finger CCHC domain-containing protein 24 (ZCCHC24) from Homo sapiens (Human).